Reading from the N-terminus, the 289-residue chain is NADPH-dependent 7-cyano-7-deazaguanine reductase (289 aa).

Residue 81–83 participates in substrate binding; sequence IES. 83-84 contacts NADPH; sequence SK. Cysteine 196 (thioimide intermediate) is an active-site residue. The active-site Proton donor is the aspartate 203. 235–236 provides a ligand contact to substrate; that stretch reads HE. 264–265 serves as a coordination point for NADPH; that stretch reads RG.

It belongs to the GTP cyclohydrolase I family. QueF type 2 subfamily. As to quaternary structure, homodimer.

It is found in the cytoplasm. It carries out the reaction 7-aminomethyl-7-carbaguanine + 2 NADP(+) = 7-cyano-7-deazaguanine + 2 NADPH + 3 H(+). The protein operates within tRNA modification; tRNA-queuosine biosynthesis. Functionally, catalyzes the NADPH-dependent reduction of 7-cyano-7-deazaguanine (preQ0) to 7-aminomethyl-7-deazaguanine (preQ1). This chain is NADPH-dependent 7-cyano-7-deazaguanine reductase, found in Albidiferax ferrireducens (strain ATCC BAA-621 / DSM 15236 / T118) (Rhodoferax ferrireducens).